The primary structure comprises 102 residues: Small ribosomal subunit protein uS10 (102 aa).

The disordered stretch occupies residues 37–61 (PIPLPTKSLKITTRKSTDGEGSSSF).

Belongs to the universal ribosomal protein uS10 family. Part of the 30S ribosomal subunit.

Its function is as follows. Involved in the binding of tRNA to the ribosomes. This chain is Small ribosomal subunit protein uS10, found in Methanococcus vannielii (strain ATCC 35089 / DSM 1224 / JCM 13029 / OCM 148 / SB).